The chain runs to 436 residues: Phaseolin, alpha-type (436 aa).

Positions 1-24 (MMRARVPLLLLGILFLASLSASFA) are cleaved as a signal peptide. Residues 233–257 (LSKHAKSSSRKSHSKQDNTIGNEFG) form a disordered region. Residues 236 to 245 (HAKSSSRKSH) are compositionally biased toward basic residues. Positions 245–396 (HSKQDNTIGN…TFSGSGEEVM (152 aa)) constitute a Cupin type-1 domain. Residue Asn-258 is glycosylated (N-linked (GlcNAc...) (complex) asparagine; alternate). Residue Asn-258 is glycosylated (N-linked (GlcNAc...) (high mannose) asparagine; alternate). The N-linked (GlcNAc...) (high mannose) asparagine glycan is linked to Asn-347. The interval 411-436 (HHHQQEQQKGSHQQEQQKGRKGAFVY) is disordered. Over residues 417 to 426 (QQKGSHQQEQ) the composition is skewed to low complexity.

The protein belongs to the 7S seed storage protein family. In terms of assembly, homotrimer. N-glycosylated; glycans consist in Man9(GlcNAc)2 and Man7(GlcNAc)2 when dually glycosylated at Asn-258 and Asn-347, whereas it consists in Xyl-Man3(GlcNAc)2 when solely glycosylated at Asn-258.

The protein resides in the vacuole. The protein localises to the aleurone grain. Major seed storage protein. In Phaseolus vulgaris (Kidney bean), this protein is Phaseolin, alpha-type.